The sequence spans 408 residues: Imidazolonepropionase (408 aa).

Fe(3+) is bound by residues His-73 and His-75. Residues His-73 and His-75 each contribute to the Zn(2+) site. 4-imidazolone-5-propanoate is bound by residues Arg-82, Tyr-145, and His-178. Tyr-145 provides a ligand contact to N-formimidoyl-L-glutamate. His-243 lines the Fe(3+) pocket. Residue His-243 coordinates Zn(2+). Residue Gln-246 coordinates 4-imidazolone-5-propanoate. Asp-318 serves as a coordination point for Fe(3+). Residue Asp-318 participates in Zn(2+) binding. Positions 320 and 322 each coordinate N-formimidoyl-L-glutamate. Ser-323 is a 4-imidazolone-5-propanoate binding site.

The protein belongs to the metallo-dependent hydrolases superfamily. HutI family. It depends on Zn(2+) as a cofactor. Fe(3+) serves as cofactor.

Its subcellular location is the cytoplasm. The enzyme catalyses 4-imidazolone-5-propanoate + H2O = N-formimidoyl-L-glutamate. It functions in the pathway amino-acid degradation; L-histidine degradation into L-glutamate; N-formimidoyl-L-glutamate from L-histidine: step 3/3. Catalyzes the hydrolytic cleavage of the carbon-nitrogen bond in imidazolone-5-propanoate to yield N-formimidoyl-L-glutamate. It is the third step in the universal histidine degradation pathway. This is Imidazolonepropionase from Shewanella putrefaciens (strain CN-32 / ATCC BAA-453).